The chain runs to 275 residues: D-apionate oxidoisomerase (275 aa).

Residues 11–13 (GKM), glutamate 32, and aspartate 68 contribute to the NAD(+) site. Zn(2+) contacts are provided by histidine 113 and glutamate 183.

The protein belongs to the ApnO family. Requires Zn(2+) as cofactor.

The catalysed reaction is D-apionate + NAD(+) = 3-oxoisoapionate + NADH + H(+). The protein operates within carbohydrate metabolism. Involved in catabolism of D-apiose. Catalyzes the conversion of D-apionate to 3-oxo-isoapionate. The sequence is that of D-apionate oxidoisomerase from Rhizobium rhizogenes (strain K84 / ATCC BAA-868) (Agrobacterium radiobacter).